The primary structure comprises 259 residues: Deoxyribose-phosphate aldolase (259 aa).

The active-site Proton donor/acceptor is the aspartate 102. Lysine 166 functions as the Schiff-base intermediate with acetaldehyde in the catalytic mechanism. Catalysis depends on lysine 200, which acts as the Proton donor/acceptor.

The protein belongs to the DeoC/FbaB aldolase family. DeoC type 2 subfamily.

It is found in the cytoplasm. The enzyme catalyses 2-deoxy-D-ribose 5-phosphate = D-glyceraldehyde 3-phosphate + acetaldehyde. Its pathway is carbohydrate degradation; 2-deoxy-D-ribose 1-phosphate degradation; D-glyceraldehyde 3-phosphate and acetaldehyde from 2-deoxy-alpha-D-ribose 1-phosphate: step 2/2. In terms of biological role, catalyzes a reversible aldol reaction between acetaldehyde and D-glyceraldehyde 3-phosphate to generate 2-deoxy-D-ribose 5-phosphate. This chain is Deoxyribose-phosphate aldolase, found in Vibrio cholerae serotype O1 (strain ATCC 39315 / El Tor Inaba N16961).